The chain runs to 152 residues: Putative NrdI-like protein (152 aa).

The protein belongs to the NrdI family.

The polypeptide is Putative NrdI-like protein (Streptococcus pyogenes serotype M18 (strain MGAS8232)).